A 663-amino-acid chain; its full sequence is MAKRNRSQFRIQERTAKKRKHEDSLLEGNVFQNAPEDMDENTIYSAKGSSWDEEEQDYEMVPRKNRSDTSNLVEGLPIKVNGKVERKLHKAQEKPKDDDEEDEDSNDSSEDDEGPNEEQEAEAKEDEPDTEEKILQLKEDIADLVTKVMEEPEENTAALGRLCKMVESKNPNTCKFSMLALVPVFKSIIPGYRIRPLTETEKKEKVSKEVSKLRNFEQALVYNYKNYVGRLQSLSKTPSNAAPIQVSLGILATQAAKELISTASHFNFRTDIFTLLLRRICKPRISTDPTSIQIIQTFETLLNEDEEGSISFEILRIFNKILKTRNFNIEESVLNMLLSLDVLHDYDPNTKLKGNVSAPKLKKKDRVHLSKKQRKARKEMQQIEEEMRNAEQAVSAEERERNQSEILKIVFTIYLNILKNNAKTLIGSVLEGLTKFGNMANFDLLGDFLEVMKELISDTEFDNLSSAEVRKALLCIVSAFSLISNTQYMKVNVDLSKFVDGLYALLPYICLDADIELSYRSLRLADPLNNEIIKPSVNVSTKAELLLKALDHVFFRSKSGTKERATAFTKRLYMCISHTPEKTSIAILKFIDKLMNRYPEISGLYSSEDRIGNGHFIMEADNPSRSNPEAATLWDNALLEKHYCPVVTKGLRSLSSRSKECSK.

The tract at residues 1-132 is disordered; the sequence is MAKRNRSQFR…AKEDEPDTEE (132 aa). The segment covering 82–97 has biased composition (basic and acidic residues); the sequence is GKVERKLHKAQEKPKD. Acidic residues predominate over residues 98–130; that stretch reads DDEEDEDSNDSSEDDEGPNEEQEAEAKEDEPDT. The stretch at 363-408 forms a coiled coil; that stretch reads KKDRVHLSKKQRKARKEMQQIEEEMRNAEQAVSAEERERNQSEILK. Phosphoserine is present on Ser395.

It belongs to the CBF/MAK21 family. In terms of assembly, forms a heterodimer with NOC2. This complex may be associated with pre-ribosomal particles. Also interacts with MCM2, MCM5 and ORC1.

Its subcellular location is the nucleus. It localises to the nucleolus. Its function is as follows. Required for synthesis of 60S ribosomal subunits and the transport of pre-ribosomes from the nucleoplasm to the cytoplasm. Also required for initiation of DNA replication. May function downstream of the origin recognition complex (ORC complex) in the loading of CDC6 and the minichromosome maintenance complex (MCM complex) onto chromatin during the G1 phase of the cell cycle. Essential for growth. In Saccharomyces cerevisiae (strain ATCC 204508 / S288c) (Baker's yeast), this protein is Nucleolar complex-associated protein 3 (NOC3).